The primary structure comprises 278 residues: Neuronal membrane glycoprotein M6-a (278 aa).

Methionine 1 is subject to N-acetylmethionine. Residues 1 to 22 (MEENMEEGQTQKGCFECCIKCL) are Cytoplasmic-facing. Residues 23 to 43 (GGIPYASLIATILLYAGVALF) form a helical membrane-spanning segment. Topologically, residues 44 to 84 (CGCGHEALSGTVNILQTYFEMARTAGDTLDVFTMIDIFKYV) are extracellular. Residues 85–105 (IYGIAAAFFVYGILLMVEGFF) form a helical membrane-spanning segment. Residues 106–127 (TTGAIKDLYGDFKITTCGRCVS) are Cytoplasmic-facing. Residues 128 to 148 (AWFIMLTYLFMLAWLGVTAFT) traverse the membrane as a helical segment. The Extracellular segment spans residues 149-213 (SLPVYMYFNV…STELNMTFHL (65 aa)). An N-linked (GlcNAc...) asparagine glycan is attached at asparagine 164. Cysteine 174 and cysteine 192 are joined by a disulfide. An N-linked (GlcNAc...) asparagine glycan is attached at asparagine 208. A helical membrane pass occupies residues 214 to 234 (FIVALAGAGAAVIAMVHYLMV). The Cytoplasmic segment spans residues 235–278 (LSANWAYVKDACRMQKYEDIKSKEEQELHDIHSTRSKERLNAYT). Serine 256 is modified (phosphoserine). The residue at position 278 (threonine 278) is a Phosphothreonine.

This sequence belongs to the myelin proteolipid protein family. In terms of assembly, interacts with OPRM1. Interacts with palmitoyltransferase ZDHHC17/HIP14; the interaction leads to palmitoylation of GPM6A. In terms of processing, N-glycosylated. Post-translationally, palmitoylated by ZDHHC17/HIP14. Expressed in hippocampus (at protein level). Isoform 1 is the predominant isoform expressed in brain, specifically in hippocampus. Isoform 2 is expressed at low levels in brain and kidney.

Its subcellular location is the cell membrane. The protein localises to the cell projection. It is found in the axon. It localises to the growth cone. The protein resides in the dendritic spine. Its subcellular location is the filopodium. The protein localises to the neuron projection. In terms of biological role, involved in neuronal differentiation, including differentiation and migration of neuronal stem cells. Plays a role in neuronal plasticity and is involved in neurite and filopodia outgrowth, filopodia motility and probably synapse formation. Gpm6a-induced filopodia formation involves mitogen-activated protein kinase (MAPK) and Src signaling pathways. May be involved in neuronal NGF-dependent Ca(2+) influx. May be involved in regulation of endocytosis and intracellular trafficking of G-protein-coupled receptors (GPCRs); enhances internalization and recycling of mu-type opioid receptor. The polypeptide is Neuronal membrane glycoprotein M6-a (Gpm6a) (Rattus norvegicus (Rat)).